The following is a 263-amino-acid chain: Putative aliphatic sulfonates transport permease protein SsuC (263 aa).

At 1–13 (MATPVKKWLLRVA) the chain is on the cytoplasmic side. The chain crosses the membrane as a helical span at residues 14–34 (PWFLPVGIVAVWQLASSVGWL). Residues 35-43 (STRILPSPE) are Periplasmic-facing. A helical membrane pass occupies residues 44–64 (GVVTAFWTLSASGELWQHLAI). Residues 58–242 (LWQHLAISSW…LLGKLADVSA (185 aa)) form the ABC transmembrane type-1 domain. Residues 65 to 68 (SSWR) lie on the Cytoplasmic side of the membrane. A helical transmembrane segment spans residues 69 to 89 (ALIGFSIGGSLGLILGLISGL). Topologically, residues 90 to 102 (SRWGERLLDTSIQ) are periplasmic. The helical transmembrane segment at 103-122 (MLRNVPHLALIPLVILWFGI) threads the bilayer. Residues 123–125 (DES) lie on the Cytoplasmic side of the membrane. A helical transmembrane segment spans residues 126 to 148 (AKIFLVALGTLFPIYINTWHGIR). The Periplasmic segment spans residues 149 to 164 (NIDRGLVEMARSYGLS). Residues 165–185 (GIPLFIHVILPGALPSIMVGV) form a helical membrane-spanning segment. Over 186–187 (RF) the chain is Cytoplasmic. Residues 188-208 (ALGLMWLTLIVAETISANSGI) traverse the membrane as a helical segment. Over 209–217 (GYLAMNARE) the chain is Periplasmic. The chain crosses the membrane as a helical span at residues 218–238 (FLQTDVVVVAIILYALLGKLA). Over 239–263 (DVSAQLLERLWLRWNPAYHLKEATV) the chain is Cytoplasmic.

The protein belongs to the binding-protein-dependent transport system permease family. CysTW subfamily.

It localises to the cell inner membrane. Part of a binding-protein-dependent transport system for aliphatic sulfonates. Probably responsible for the translocation of the substrate across the membrane. This is Putative aliphatic sulfonates transport permease protein SsuC (ssuC) from Escherichia coli (strain K12).